We begin with the raw amino-acid sequence, 350 residues long: Methionine import ATP-binding protein MetN (350 aa).

The 240-residue stretch at 2-241 folds into the ABC transporter domain; sequence IQIKNLKKEY…PQAPVTRSFV (240 aa). 38-45 provides a ligand contact to ATP; it reads GHSGAGKS.

The protein belongs to the ABC transporter superfamily. Methionine importer (TC 3.A.1.24) family. The complex is composed of two ATP-binding proteins (MetN), two transmembrane proteins (MetI) and a solute-binding protein (MetQ).

The protein localises to the cell inner membrane. The catalysed reaction is L-methionine(out) + ATP + H2O = L-methionine(in) + ADP + phosphate + H(+). It carries out the reaction D-methionine(out) + ATP + H2O = D-methionine(in) + ADP + phosphate + H(+). Its function is as follows. Part of the ABC transporter complex MetNIQ involved in methionine import. Responsible for energy coupling to the transport system. The polypeptide is Methionine import ATP-binding protein MetN (Francisella tularensis subsp. tularensis (strain FSC 198)).